The sequence spans 228 residues: Uridylate kinase (228 aa).

ATP is bound at residue 9-10; it reads GS. Position 44 (G44) interacts with UMP. ATP is bound by residues G45 and R49. Residues D66 and 114-120 contribute to the UMP site; that span reads IVAAQTT. ATP-binding residues include T140, Y146, and D149.

Belongs to the UMP kinase family. Homohexamer.

Its subcellular location is the cytoplasm. It carries out the reaction UMP + ATP = UDP + ADP. It functions in the pathway pyrimidine metabolism; CTP biosynthesis via de novo pathway; UDP from UMP (UMPK route): step 1/1. Its activity is regulated as follows. Inhibited by UTP. In terms of biological role, catalyzes the reversible phosphorylation of UMP to UDP. In Haloarcula marismortui (strain ATCC 43049 / DSM 3752 / JCM 8966 / VKM B-1809) (Halobacterium marismortui), this protein is Uridylate kinase.